The following is a 328-amino-acid chain: Protein chibby homolog 2 (328 aa).

The tract at residues Asn-180–Asp-231 is disordered. Residues Gly-182–Ala-195 show a composition bias toward polar residues. Positions Gln-206–Ser-215 are enriched in basic and acidic residues. A coiled-coil region spans residues Arg-259–Ile-307.

Belongs to the chibby family. SPERT subfamily.

The polypeptide is Protein chibby homolog 2 (CBY2) (Gallus gallus (Chicken)).